We begin with the raw amino-acid sequence, 590 residues long: Ankyrin repeat-containing protein ITN1 (590 aa).

Residues 25–44 (ENQNPMIDPSPTPSPSATAT) are disordered. ANK repeat units lie at residues 73 to 102 (HNDT…SQME), 128 to 157 (LGET…RESI), 163 to 192 (SGYD…TLSQ), 197 to 226 (SNAT…NLLE), 231 to 260 (NNKN…QLAR), 265 to 294 (KGQT…AIVM), and 299 to 329 (SCNT…NANT). 4 helical membrane passes run 422–442 (VTVV…TVPG), 460–480 (IFFI…VVQI), 500–520 (LMWL…YIVV), and 531–551 (VTVV…YYVV).

As to quaternary structure, interacts with REM19/RTV1. As to expression, expressed in roots, shoots, leaf vasculature and stems.

The protein localises to the cell membrane. Its function is as follows. Involved in salt stress tolerance. May act through abscisic acid (ABA) signaling pathways and promote reactive oxygen species (ROS) production. The protein is Ankyrin repeat-containing protein ITN1 of Arabidopsis thaliana (Mouse-ear cress).